The sequence spans 152 residues: Phospholipase A2 pkP2 (152 aa).

The first 21 residues, 1–21 (MNPAHLLVLLAVCVSLLGASA), serve as a signal peptide directing secretion. Positions 22–27 (IPPLPL) are excised as a propeptide. 7 disulfide bridges follow: C38/C104, C54/C151, C56/C72, C71/C132, C78/C125, C88/C118, and C111/C123. Positions 55, 57, and 59 each coordinate Ca(2+). The active site involves H75. Ca(2+) is bound at residue D76. Residue D126 is part of the active site.

This sequence belongs to the phospholipase A2 family. Group I subfamily. The cofactor is Ca(2+).

The protein localises to the secreted. It carries out the reaction a 1,2-diacyl-sn-glycero-3-phosphocholine + H2O = a 1-acyl-sn-glycero-3-phosphocholine + a fatty acid + H(+). Its function is as follows. PA2 catalyzes the calcium-dependent hydrolysis of the 2-acyl groups in 3-sn-phosphoglycerides. This chain is Phospholipase A2 pkP2, found in Laticauda semifasciata (Black-banded sea krait).